The primary structure comprises 407 residues: 3-oxoacyl-[acyl-carrier-protein] synthase 1 (407 aa).

A Ketosynthase family 3 (KS3) domain is found at 1–405 (MKRVVITGLG…GTNVSLIIKK (405 aa)). Active-site for beta-ketoacyl synthase activity residues include C164, H299, and H335.

The protein belongs to the thiolase-like superfamily. Beta-ketoacyl-ACP synthases family. As to quaternary structure, homodimer.

The protein localises to the cytoplasm. It carries out the reaction a fatty acyl-[ACP] + malonyl-[ACP] + H(+) = a 3-oxoacyl-[ACP] + holo-[ACP] + CO2. The catalysed reaction is (3Z)-decenoyl-[ACP] + malonyl-[ACP] + H(+) = 3-oxo-(5Z)-dodecenoyl-[ACP] + holo-[ACP] + CO2. Its pathway is lipid metabolism; fatty acid biosynthesis. Functionally, involved in the type II fatty acid elongation cycle. Catalyzes the elongation of a wide range of acyl-ACP by the addition of two carbons from malonyl-ACP to an acyl acceptor. Can also use unsaturated fatty acids. Catalyzes a key reaction in unsaturated fatty acid (UFA) synthesis, the elongation of the cis-3-decenoyl-ACP produced by FabA. This chain is 3-oxoacyl-[acyl-carrier-protein] synthase 1 (fabB), found in Buchnera aphidicola subsp. Baizongia pistaciae (strain Bp).